A 130-amino-acid chain; its full sequence is Gonadotropin subunit beta-1 (130 aa).

A signal peptide spans 1–18 (MRMHFVVMVMLLPALMMA). Disulfide bonds link C26/C74, C40/C89, C51/C105, C55/C107, and C110/C117. A glycan (N-linked (GlcNAc...) asparagine) is linked at N30.

Belongs to the glycoprotein hormones subunit beta family. As to quaternary structure, heterodimer of an alpha and a beta chain.

The protein resides in the secreted. Functionally, involved in gametogenesis and steroidogenesis. The protein is Gonadotropin subunit beta-1 (cgba) of Cyprinus carpio (Common carp).